Reading from the N-terminus, the 260-residue chain is Diphthine synthase (260 aa).

Residues Leu9, Asp85, Ile88, 113-114 (TA), Leu168, Ala202, and His227 each bind S-adenosyl-L-methionine.

The protein belongs to the diphthine synthase family. As to quaternary structure, homodimer.

The enzyme catalyses 2-[(3S)-amino-3-carboxypropyl]-L-histidyl-[translation elongation factor 2] + 3 S-adenosyl-L-methionine = diphthine-[translation elongation factor 2] + 3 S-adenosyl-L-homocysteine + 3 H(+). It functions in the pathway protein modification; peptidyl-diphthamide biosynthesis. S-adenosyl-L-methionine-dependent methyltransferase that catalyzes the trimethylation of the amino group of the modified target histidine residue in translation elongation factor 2 (EF-2), to form an intermediate called diphthine. The three successive methylation reactions represent the second step of diphthamide biosynthesis. This is Diphthine synthase from Haloquadratum walsbyi (strain DSM 16790 / HBSQ001).